Reading from the N-terminus, the 83-residue chain is NAD(P)H-quinone oxidoreductase subunit L (83 aa).

2 consecutive transmembrane segments (helical) span residues 18–38 and 53–73; these read IGGY…LLFF and FSVY…APFL.

Belongs to the complex I NdhL subunit family. As to quaternary structure, NDH-1 can be composed of about 15 different subunits; different subcomplexes with different compositions have been identified which probably have different functions.

It localises to the cellular thylakoid membrane. It catalyses the reaction a plastoquinone + NADH + (n+1) H(+)(in) = a plastoquinol + NAD(+) + n H(+)(out). The catalysed reaction is a plastoquinone + NADPH + (n+1) H(+)(in) = a plastoquinol + NADP(+) + n H(+)(out). Functionally, NDH-1 shuttles electrons from an unknown electron donor, via FMN and iron-sulfur (Fe-S) centers, to quinones in the respiratory and/or the photosynthetic chain. The immediate electron acceptor for the enzyme in this species is believed to be plastoquinone. Couples the redox reaction to proton translocation, and thus conserves the redox energy in a proton gradient. Cyanobacterial NDH-1 also plays a role in inorganic carbon-concentration. This is NAD(P)H-quinone oxidoreductase subunit L from Synechococcus sp. (strain CC9311).